The sequence spans 199 residues: A-type ATP synthase subunit E (199 aa).

It belongs to the V-ATPase E subunit family. As to quaternary structure, has multiple subunits with at least A(3), B(3), C, D, E, F, H, I and proteolipid K(x).

The protein localises to the cell membrane. Functionally, component of the A-type ATP synthase that produces ATP from ADP in the presence of a proton gradient across the membrane. This Pyrococcus abyssi (strain GE5 / Orsay) protein is A-type ATP synthase subunit E.